Reading from the N-terminus, the 1250-residue chain is MVTRVASSERPRPLVPESIVDAPTQRLYAIGVFVALQAYKIYDLLKLETSSISDVPKSGFLVKWIIIDAIYLRLLPKFRIPWLSFQPAATLLQIAIFAAINLLLSSLSSLKWISIGSILLPYFKKKELSISEHKINPNNVIHNSSRILGQYTLQVLPEGTAKINPLHENYCLNSLRKDQYVDLAIQFNSTIPKYIQYSHVDLETKEETLVEVSGRSLRKLLSSSSKNPKEPRLQTIYLKTNKRGLYTLKHVVDKSKLDVRIFRSEAVVVSCPTATFASRQSGGRLRERCVGDTDNAELKVTGVAPLQVTYRNWDGKHFNTHIIDSTIPDDFHPPAVVLSSNPKDIVFYKGIDIQWARSSEIFVPINTLLKAPGQWIYAVTQVTDALGNSQQFPSNDQFLLRFAHGYTEADGESHSLPENVYSVFVHQRPDIQFRGCSIESPANLFPNKETSLSLYSSFSEYNSLEVGVDRYELGLDPQNITVPPLSHKTYQISPRSSANINVKKPGIYVLSSVSSQYCSGEVLEPNTCLVVTPPEAKVSVSFEEISDQCAGSIGARADLELEGTPPFTIAYRMTKDNEASRIQYVTTDRTRYQLNFTPKKAGKYRYIILGIQDANYGYRELSGSSFYKDQTVFPLADASFEERRNGDLSTVVKTSCIGDTMSLPVLLTGSAPWTLEYEIFRNNKREESHVVESKDPRYILEVPMLVHGSQYTITLVSVKDSNGCKRSLNTADTVIKVRRQRPTATFYSSDNTYTLKSVEGALMKIPLRLAGEKPWYVEYSHTSGLNKVSHHKEVLNDPNSYLTVRKSGTYTLLSVSDSSCPGTIQNVEQKYQVEWLPRPFLSIPSLESSVKGKTRYYEQNAVCAGDSSAFEVQLSGSGPFLLKHDKILVDEKSKTYPKQKSELSTVQNTVLVKADTAVPGVYHYEFTKLSDSLYSDSDAVTIVNNQSYQAVVLQRVNSLPKASFMNVEKLYTFCINTDVTQSNAQLIAIQLQGASPFSLVIGIKNELTGSVSKYTLNDIHESVYKFAFPQEQLTLGKHVVRLLQVRDANGCAASITKTQPAAKVSVVEMASLAPLGSRQYYCVGDRLSFALQGLPPFDVEYEFNGVTQHATSDSHILTRLIELPGVVAMKSISDHGSHCKSYINPPIEQIVHDIPTVRISNGKDVIENIHEGDQAEISFHFTGTPPFSFSYARRALGKKRPGKVLETHTVTGINEYEYKVLSSVEGVYTVLSVQDKYCRYPQDSTSSSNI.

The tract at residues 1–79 (MVTRVASSER…IYLRLLPKFR (79 aa)) is pore side. A helical transmembrane segment spans residues 80-100 (IPWLSFQPAATLLQIAIFAAI). A cisternal side region spans residues 101-1250 (NLLLSSLSSL…PQDSTSSSNI (1150 aa)).

In terms of assembly, component of the nuclear pore complex (NPC). NPC constitutes the exclusive means of nucleocytoplasmic transport. NPCs allow the passive diffusion of ions and small molecules and the active, nuclear transport receptor-mediated bidirectional transport of macromolecules such as proteins, RNAs, ribonucleoparticles (RNPs), and ribosomal subunits across the nuclear envelope.

The protein localises to the nucleus. It is found in the nuclear pore complex. Its subcellular location is the nucleus membrane. Functions as a component of the nuclear pore complex (NPC). NPC components, collectively referred to as nucleoporins (NUPs), can play the role of both NPC structural components and of docking or interaction partners for transiently associated nuclear transport factors. This Schizosaccharomyces pombe (strain 972 / ATCC 24843) (Fission yeast) protein is Nucleoporin pom152 (pom152).